We begin with the raw amino-acid sequence, 103 residues long: Pyrimidine/purine nucleoside phosphorylase (103 aa).

Belongs to the nucleoside phosphorylase PpnP family.

The enzyme catalyses a purine D-ribonucleoside + phosphate = a purine nucleobase + alpha-D-ribose 1-phosphate. The catalysed reaction is adenosine + phosphate = alpha-D-ribose 1-phosphate + adenine. It carries out the reaction cytidine + phosphate = cytosine + alpha-D-ribose 1-phosphate. It catalyses the reaction guanosine + phosphate = alpha-D-ribose 1-phosphate + guanine. The enzyme catalyses inosine + phosphate = alpha-D-ribose 1-phosphate + hypoxanthine. The catalysed reaction is thymidine + phosphate = 2-deoxy-alpha-D-ribose 1-phosphate + thymine. It carries out the reaction uridine + phosphate = alpha-D-ribose 1-phosphate + uracil. It catalyses the reaction xanthosine + phosphate = alpha-D-ribose 1-phosphate + xanthine. Its function is as follows. Catalyzes the phosphorolysis of diverse nucleosides, yielding D-ribose 1-phosphate and the respective free bases. Can use uridine, adenosine, guanosine, cytidine, thymidine, inosine and xanthosine as substrates. Also catalyzes the reverse reactions. This Chlorobium chlorochromatii (strain CaD3) protein is Pyrimidine/purine nucleoside phosphorylase.